The following is a 415-amino-acid chain: Nacrein-like protein F (415 aa).

Asn27 is a glycosylation site (N-linked (GlcNAc...) asparagine). One can recognise an Alpha-carbonic anhydrase domain in the interval 33-414; it reads AGFSYDRSIC…KNKVTVYKSF (382 aa). Zn(2+)-binding residues include His132, His134, and His157. The interval 201–297 is disordered; sequence DEPDDEECKH…GENGHKHGCR (97 aa). Basic and acidic residues predominate over residues 207-219; it reads ECKHILKGHHPDN. The span at 220 to 289 shows a compositional bias: low complexity; that stretch reads NENGNGDNGN…NNGENGNNGE (70 aa). A run of 22 repeats spans residues 225–227, 228–230, 231–233, 234–236, 237–239, 240–242, 243–245, 246–248, 249–251, 252–254, 255–257, 258–260, 261–263, 264–266, 267–269, 270–272, 273–275, 276–278, 279–281, 282–284, 285–286, and 288–290. Positions 225-290 are 22 X 3 AA approximate tandem repeats of G-X-N; it reads GDNGNNGYNG…NGENGNNGEN (66 aa). 355-356 serves as a coordination point for substrate; the sequence is TT.

Belongs to the alpha-carbonic anhydrase family. In terms of assembly, homooligomer; disulfide-linked. May also be disulfide-linked to insoluble organic matrix. The cofactor is Zn(2+). Expressed in the mantle.

The protein resides in the secreted. Its subcellular location is the extracellular space. It localises to the extracellular matrix. The enzyme catalyses hydrogencarbonate + H(+) = CO2 + H2O. Its function is as follows. Acts as a negative regulator for calcification in the shells of mollusks. May function both as a calcium concentrator and as a carbonic anhydrase required for production of carbonate ions, which are assembled to CaCO(3) at mineralization sites. Is important for shell formation in both the calcitic prismatic layer and the aragonitic nacreous layer. Shows inhibitory activity of crystal formation when present in free state but, when attached to the insoluble matrix, may regulate the form and size of aragonite crystal. The protein is Nacrein-like protein F of Pinctada fucata (Akoya pearl oyster).